Here is a 186-residue protein sequence, read N- to C-terminus: D-glycero-beta-D-manno-heptose-1,7-bisphosphate 7-phosphatase (186 aa).

Asp-9 serves as the catalytic Nucleophile. 2 residues coordinate Mg(2+): Asp-9 and Asp-11. Substrate is bound by residues 9 to 11 (DRD), 17 to 20 (DHGY), and 51 to 54 (TNQS). Catalysis depends on Asp-11, which acts as the Proton donor. The Zn(2+) site is built by Cys-90, His-92, Cys-105, and Cys-107. Residue 108–109 (RK) coordinates substrate. Asp-134 and Lys-135 together coordinate Mg(2+). Position 135 (Lys-135) interacts with substrate.

The protein belongs to the GmhB family. Monomer. It depends on Mg(2+) as a cofactor. The cofactor is Zn(2+).

It is found in the cytoplasm. It carries out the reaction D-glycero-beta-D-manno-heptose 1,7-bisphosphate + H2O = D-glycero-beta-D-manno-heptose 1-phosphate + phosphate. It functions in the pathway nucleotide-sugar biosynthesis; ADP-L-glycero-beta-D-manno-heptose biosynthesis; ADP-L-glycero-beta-D-manno-heptose from D-glycero-beta-D-manno-heptose 7-phosphate: step 2/4. The protein operates within bacterial outer membrane biogenesis; LPS core biosynthesis. Functionally, converts the D-glycero-beta-D-manno-heptose 1,7-bisphosphate intermediate into D-glycero-beta-D-manno-heptose 1-phosphate by removing the phosphate group at the C-7 position in vitro. Also catalyzes the dephosphorylation of D-glycero-alpha-D-manno-heptose-1,7-bisphosphate in vitro. The sequence is that of D-glycero-beta-D-manno-heptose-1,7-bisphosphate 7-phosphatase (gmhB) from Vibrio cholerae serotype O1 (strain ATCC 39315 / El Tor Inaba N16961).